A 3132-amino-acid chain; its full sequence is Enniatin synthetase (3132 aa).

The interval 53–466 (ADDKQRAVGH…VEKVDMMTQE (414 aa)) is condensation 1. The disordered stretch occupies residues 186–212 (NDEHPRQFETPDSSQATPEEDLQPNPS). The interval 495-887 (SQSPNKAAVA…GRMDSQVKIR (393 aa)) is adenylation 1. The interval 994–1013 (SQKTHSTPSQQSQAAISSGT) is disordered. Residues 1010–1086 (SSGTDTETKL…GLKAIVIGTS (77 aa)) form the Carrier 1 domain. S1047 is subject to O-(pantetheine 4'-phosphoryl)serine. The interval 1105–1534 (SYAQNRMWFL…ETCISVLPLT (430 aa)) is condensation 2. Residues 1563 to 1960 (FREQAAANPE…GRMDNQFKIR (398 aa)) are adenylation 2. The S-adenosyl-L-methionine-dependent N-methyltransferase stretch occupies residues 2021 to 2177 (EGWQDHFESG…YLAEVIDGLI (157 aa)). Carrier domains follow at residues 2504-2578 (FPIS…RQGL) and 2598-2672 (APRT…ESSH). S2538 and S2632 each carry O-(pantetheine 4'-phosphoryl)serine. The segment at 2719–3124 (QDVYPSTQMQ…RHVLEEVCKT (406 aa)) is condensation 3.

It belongs to the NRP synthetase family. The cofactor is pantetheine 4'-phosphate.

It functions in the pathway antibiotic biosynthesis; enniatin biosynthesis. Functionally, nonribosomal peptide synthetase that synthesizes enniatin by coupling three D-hydroxycarboxylic acids and three L-amino acids via amide and ester bonds in an alternating fashion. Whereas ESYN1 can accept different amino acids as precursors (L-valine, L-isoleucine or L-leucine), only one species of D-hydroxycarboxylic acid can be found in natural enniatin isolates (D-hydroxyisovaleric acid, D-Hiv). D-Hiv stems from L-valine deanimation by a valine aminotransferase to 2-keto-isovaleric acid (2-Kiv), which becomes subsequently reduced by a keto-isovaleric acid reductase (KivR) to D-Hiv. The polypeptide is Enniatin synthetase (Fusarium oxysporum (Fusarium vascular wilt)).